We begin with the raw amino-acid sequence, 308 residues long: MTAEQHAGPGAETRCGFVALIGAPNVGKSTLVNALVGSKVTIVSRKVQTTRALIRGIVIEGTSQIILVDTPGIFSPKRRLDRAMVTTAWSGAHDADLVCVLLDAKKGLDDEAQAIIDKAAAVAHQKILVVNKVDLVPREKLLALVAAANEKLPFARTFMISALSGDGVDDLKQALAAMVPPGPFHYPEDQMSDAPMRHLAAEITREKIYSHLHQELPYQSTVETDSWTERKDGSIRIEQTIFVERDSQRKIVLGKGGATIKSIGAQSRKEIAEITGVPVHLFLFVKVRENWGDDPDRYREMGLEFPRE.

An Era-type G domain is found at 14-181; it reads RCGFVALIGA…KQALAAMVPP (168 aa). Residues 22 to 29 form a G1 region; that stretch reads GAPNVGKS. 22-29 contacts GTP; it reads GAPNVGKS. The interval 48 to 52 is G2; it reads QTTRA. The G3 stretch occupies residues 69 to 72; that stretch reads DTPG. Residues 69 to 73 and 131 to 134 contribute to the GTP site; these read DTPGI and NKVD. The segment at 131–134 is G4; that stretch reads NKVD. The interval 160–162 is G5; that stretch reads ISA. Positions 212–289 constitute a KH type-2 domain; that stretch reads LHQELPYQST…HLFLFVKVRE (78 aa).

The protein belongs to the TRAFAC class TrmE-Era-EngA-EngB-Septin-like GTPase superfamily. Era GTPase family. In terms of assembly, monomer.

It is found in the cytoplasm. It localises to the cell inner membrane. In terms of biological role, an essential GTPase that binds both GDP and GTP, with rapid nucleotide exchange. Plays a role in 16S rRNA processing and 30S ribosomal subunit biogenesis and possibly also in cell cycle regulation and energy metabolism. This is GTPase Era from Bradyrhizobium sp. (strain BTAi1 / ATCC BAA-1182).